A 505-amino-acid chain; its full sequence is One cut domain family member 2 (505 aa).

3 disordered regions span residues 29–94, 165–190, and 275–333; these read LGTL…GTAA, KFHH…RLSG, and EQHL…QLEE. Positions 35–56 are enriched in gly residues; the sequence is PVGGGSGGGGGGGGGGGGGGPG. Residues 167-187 show a composition bias toward basic residues; the sequence is HHPHPHHHPHHHHHHHHHHQR. The CUT DNA-binding region spans 325–411; sequence VATSGQLEEI…QRMSALRLAA (87 aa). Residues 427 to 486 constitute a DNA-binding region (homeobox); the sequence is QKKSRLVFTDLQRRTLFAIFKENKRPSKEMQITISQQLGLELTTVSNFFMNARRRSLEKW.

This sequence belongs to the CUT homeobox family.

The protein localises to the nucleus. Transcriptional activator. Activates the transcription of a number of liver genes such as HNF3B. The polypeptide is One cut domain family member 2 (Onecut2) (Mus musculus (Mouse)).